Consider the following 151-residue polypeptide: Large ribosomal subunit protein eL8 (151 aa).

The protein belongs to the eukaryotic ribosomal protein eL8 family. As to quaternary structure, part of the 50S ribosomal subunit. Probably part of the RNase P complex.

It is found in the cytoplasm. Functionally, multifunctional RNA-binding protein that recognizes the K-turn motif in ribosomal RNA, the RNA component of RNase P, box H/ACA, box C/D and box C'/D' sRNAs. The chain is Large ribosomal subunit protein eL8 from Pyrobaculum aerophilum (strain ATCC 51768 / DSM 7523 / JCM 9630 / CIP 104966 / NBRC 100827 / IM2).